The chain runs to 150 residues: Ribonuclease H (150 aa).

The RNase H type-1 domain occupies 2–143 (PAPILDIFVD…ADELANRAIE (142 aa)). 4 residues coordinate Mg(2+): D11, E49, D71, and D135.

The protein belongs to the RNase H family. Monomer. It depends on Mg(2+) as a cofactor.

Its subcellular location is the cytoplasm. It carries out the reaction Endonucleolytic cleavage to 5'-phosphomonoester.. Endonuclease that specifically degrades the RNA of RNA-DNA hybrids. The protein is Ribonuclease H of Dichelobacter nodosus (strain VCS1703A).